The following is an 864-amino-acid chain: Eukaryotic translation initiation factor 3 subunit C (864 aa).

The disordered stretch occupies residues 1–77 (MSRFFARGGS…EESEDEERVT (77 aa)). Residues 14 to 54 (SSSEDEQELYSDREEEEQFSDSEEESSEAESSEEESSDDEG) are compositionally biased toward acidic residues. Residues 602–776 (FHMHINLELL…NAIVFRKGVE (175 aa)) form the PCI domain. The disordered stretch occupies residues 815-864 (RDQGAGARGGRGAGRGGQARGGPRFPGGQQGRRPGGQQFSGGALGGAIKA). Residues 820–864 (GARGGRGAGRGGQARGGPRFPGGQQGRRPGGQQFSGGALGGAIKA) are compositionally biased toward gly residues.

It belongs to the eIF-3 subunit C family. In terms of assembly, component of the eukaryotic translation initiation factor 3 (eIF-3) complex.

The protein localises to the cytoplasm. In terms of biological role, component of the eukaryotic translation initiation factor 3 (eIF-3) complex, which is involved in protein synthesis of a specialized repertoire of mRNAs and, together with other initiation factors, stimulates binding of mRNA and methionyl-tRNAi to the 40S ribosome. The eIF-3 complex specifically targets and initiates translation of a subset of mRNAs involved in cell proliferation. In Aspergillus terreus (strain NIH 2624 / FGSC A1156), this protein is Eukaryotic translation initiation factor 3 subunit C (nip1).